Reading from the N-terminus, the 84-residue chain is Sec-independent protein translocase protein TatA (84 aa).

The helical transmembrane segment at Met1–Gly21 threads the bilayer. A disordered region spans residues Lys40–Ala84. Composition is skewed to basic and acidic residues over residues Ala42–Lys66 and Ala75–Ala84.

This sequence belongs to the TatA/E family. In terms of assembly, the Tat system comprises two distinct complexes: a TatABC complex, containing multiple copies of TatA, TatB and TatC subunits, and a separate TatA complex, containing only TatA subunits. Substrates initially bind to the TatABC complex, which probably triggers association of the separate TatA complex to form the active translocon.

It is found in the cell inner membrane. In terms of biological role, part of the twin-arginine translocation (Tat) system that transports large folded proteins containing a characteristic twin-arginine motif in their signal peptide across membranes. TatA could form the protein-conducting channel of the Tat system. The chain is Sec-independent protein translocase protein TatA from Vibrio atlanticus (strain LGP32) (Vibrio splendidus (strain Mel32)).